Here is a 231-residue protein sequence, read N- to C-terminus: Phosphatidylserine decarboxylase proenzyme (231 aa).

The active-site Schiff-base intermediate with substrate; via pyruvic acid is the Ser-188. Ser-188 carries the post-translational modification Pyruvic acid (Ser); by autocatalysis.

This sequence belongs to the phosphatidylserine decarboxylase family. PSD-A subfamily. In terms of assembly, heterodimer of a large membrane-associated beta subunit and a small pyruvoyl-containing alpha subunit. It depends on pyruvate as a cofactor. In terms of processing, is synthesized initially as an inactive proenzyme. Formation of the active enzyme involves a self-maturation process in which the active site pyruvoyl group is generated from an internal serine residue via an autocatalytic post-translational modification. Two non-identical subunits are generated from the proenzyme in this reaction, and the pyruvate is formed at the N-terminus of the alpha chain, which is derived from the carboxyl end of the proenzyme. The post-translation cleavage follows an unusual pathway, termed non-hydrolytic serinolysis, in which the side chain hydroxyl group of the serine supplies its oxygen atom to form the C-terminus of the beta chain, while the remainder of the serine residue undergoes an oxidative deamination to produce ammonia and the pyruvoyl prosthetic group on the alpha chain.

It localises to the cell membrane. The catalysed reaction is a 1,2-diacyl-sn-glycero-3-phospho-L-serine + H(+) = a 1,2-diacyl-sn-glycero-3-phosphoethanolamine + CO2. It participates in phospholipid metabolism; phosphatidylethanolamine biosynthesis; phosphatidylethanolamine from CDP-diacylglycerol: step 2/2. Catalyzes the formation of phosphatidylethanolamine (PtdEtn) from phosphatidylserine (PtdSer). This Rickettsia akari (strain Hartford) protein is Phosphatidylserine decarboxylase proenzyme.